The chain runs to 25 residues: Dermaseptin-5.1TR (25 aa).

Residue Val-25 is modified to Valine amide.

Expressed by the skin glands.

Its subcellular location is the secreted. Has antimicrobial activity. The polypeptide is Dermaseptin-5.1TR (Phyllomedusa trinitatis (Trinidad leaf frog)).